The chain runs to 499 residues: Apolipoprotein N-acyltransferase (499 aa).

6 helical membrane-spanning segments follow: residues 9 to 29 (LLLGLLSGLVFAPTFLLPALL), 50 to 70 (LGYIFGFGHFLSGIYWISIGV), 77 to 97 (FWWAIPFALFGLPIILAFFVS), 114 to 134 (FIFCLYWVLFEWVRSWIFTGL), 148 to 168 (ILIQSLNIIGIYGLSFIVIYI), and 183 to 203 (LKVLLLTSSITLAVIITYGSV). The CN hydrolase domain occupies 220-464 (VQPSIPQTEK…DGLIPKKLDS (245 aa)). The active-site Proton acceptor is glutamate 259. Lysine 322 is an active-site residue. The active-site Nucleophile is cysteine 372. A helical transmembrane segment spans residues 466-486 (TIFSKFGNITILLIVFFIFLV).

The protein belongs to the CN hydrolase family. Apolipoprotein N-acyltransferase subfamily.

Its subcellular location is the cell inner membrane. The enzyme catalyses N-terminal S-1,2-diacyl-sn-glyceryl-L-cysteinyl-[lipoprotein] + a glycerophospholipid = N-acyl-S-1,2-diacyl-sn-glyceryl-L-cysteinyl-[lipoprotein] + a 2-acyl-sn-glycero-3-phospholipid + H(+). It functions in the pathway protein modification; lipoprotein biosynthesis (N-acyl transfer). Its function is as follows. Catalyzes the phospholipid dependent N-acylation of the N-terminal cysteine of apolipoprotein, the last step in lipoprotein maturation. This Rickettsia bellii (strain RML369-C) protein is Apolipoprotein N-acyltransferase.